We begin with the raw amino-acid sequence, 256 residues long: Small ribosomal subunit protein uS2 (256 aa).

The protein belongs to the universal ribosomal protein uS2 family.

The sequence is that of Small ribosomal subunit protein uS2 from Brucella melitensis biotype 1 (strain ATCC 23456 / CCUG 17765 / NCTC 10094 / 16M).